The sequence spans 316 residues: MSSQKQLEGMIFDVQSFSVHDGPGCRTTVFLNGCPLSCKWCANPESWTVRPHMMFSELSCQYENGCTVCHGKCKNGALSFNLDNKPVIDWNICKDCESFECVNSCYYNAFKLCAKPYTVDELVQVIKRDSNNWRSNGGVTFSGGEPLLQHEFLHEVLLKCHEVNVHTAIETSACVSNEVFNKIFNDIDFAFIDIKHMDREKHKEQTGVYNDLILENISNLANSDWNGRLVLRVPVISGFNDSDENISDIISFMHKNNLVEINLLPFHRLGESKWTQLGKEYEYSDKGDVDEGHLEELQDIFLDNGIACYVGHVTAF.

Positions 20 to 307 (HDGPGCRTTV…QDIFLDNGIA (288 aa)) constitute a Radical SAM core domain. Residues Cys-34, Cys-38, Cys-41, Cys-60, Cys-66, Cys-69, and Cys-105 each coordinate [4Fe-4S] cluster. 40-42 (WCA) contributes to the S-adenosyl-L-methionine binding site. Positions 84–115 (NKPVIDWNICKDCESFECVNSCYYNAFKLCAK) constitute a 4Fe-4S ferredoxin-type domain. S-adenosyl-L-methionine-binding positions include Gly-144, 193–195 (DIK), and His-267.

The protein belongs to the organic radical-activating enzymes family. As to quaternary structure, monomer. [4Fe-4S] cluster serves as cofactor.

The catalysed reaction is glycyl-[protein] + reduced [flavodoxin] + S-adenosyl-L-methionine = glycin-2-yl radical-[protein] + semiquinone [flavodoxin] + 5'-deoxyadenosine + L-methionine + H(+). Its function is as follows. Catalyzes activation of 4-hydroxyphenylacetate decarboxylase under anaerobic conditions by generation of an organic free radical on a glycine residue, via a homolytic cleavage of S-adenosyl-L-methionine (SAM). The polypeptide is 4-hydroxyphenylacetate decarboxylase activating enzyme (Clostridioides difficile (Peptoclostridium difficile)).